We begin with the raw amino-acid sequence, 259 residues long: 4-hydroxy-tetrahydrodipicolinate reductase (259 aa).

Residues 9-14 and glutamate 35 contribute to the NAD(+) site; that span reads GAGGRM. Residue arginine 36 coordinates NADP(+). NAD(+)-binding positions include 92–94 and 116–119; these read GTT and APNM. Histidine 149 (proton donor/acceptor) is an active-site residue. Residue histidine 150 participates in (S)-2,3,4,5-tetrahydrodipicolinate binding. Lysine 153 functions as the Proton donor in the catalytic mechanism. 159–160 is a binding site for (S)-2,3,4,5-tetrahydrodipicolinate; it reads GT.

This sequence belongs to the DapB family.

The protein localises to the cytoplasm. The catalysed reaction is (S)-2,3,4,5-tetrahydrodipicolinate + NAD(+) + H2O = (2S,4S)-4-hydroxy-2,3,4,5-tetrahydrodipicolinate + NADH + H(+). It carries out the reaction (S)-2,3,4,5-tetrahydrodipicolinate + NADP(+) + H2O = (2S,4S)-4-hydroxy-2,3,4,5-tetrahydrodipicolinate + NADPH + H(+). It functions in the pathway amino-acid biosynthesis; L-lysine biosynthesis via DAP pathway; (S)-tetrahydrodipicolinate from L-aspartate: step 4/4. Catalyzes the conversion of 4-hydroxy-tetrahydrodipicolinate (HTPA) to tetrahydrodipicolinate. The protein is 4-hydroxy-tetrahydrodipicolinate reductase of Oleidesulfovibrio alaskensis (strain ATCC BAA-1058 / DSM 17464 / G20) (Desulfovibrio alaskensis).